The sequence spans 117 residues: DNA-directed RNA polymerase II subunit RPB11 (117 aa).

Met1 bears the N-acetylmethionine mark.

It belongs to the archaeal Rpo11/eukaryotic RPB11/RPC19 RNA polymerase subunit family. Component of the RNA polymerase II (Pol II) core complex consisting of 12 subunits: a ten-subunit catalytic core composed of POLR2A/RPB1, POLR2B/RPB2, POLR2C/RPB3, POLR2I/RPB9, POLR2J/RPB11, POLR2E/RPABC1, POLR2F/RPABC2, POLR2H/RPABC3, POLR2K/RPABC4 and POLR2L/RPABC5 and a mobile stalk composed of two subunits POLR2D/RPB4 and POLR2G/RPB7, protruding from the core and functioning primarily in transcription initiation. Part of Pol II(G) complex, in which Pol II core associates with an additional subunit POLR2M; unlike conventional Pol II, Pol II(G) functions as a transcriptional repressor. Part of TBP-based Pol II pre-initiation complex (PIC), in which Pol II core assembles with general transcription factors and other specific initiation factors including GTF2E1, GTF2E2, GTF2F1, GTF2F2, TCEA1, ERCC2, ERCC3, GTF2H2, GTF2H3, GTF2H4, GTF2H5, GTF2A1, GTF2A2, GTF2B and TBP; this large multi-subunit PIC complex mediates DNA unwinding and targets Pol II core to the transcription start site where the first phosphodiester bond forms. Interacts with PTPN6; this interaction promotes the recruitment of RNA pol II to the PCK1 promoter.

It is found in the nucleus. In terms of biological role, DNA-dependent RNA polymerase catalyzes the transcription of DNA into RNA using the four ribonucleoside triphosphates as substrates. Component of RNA polymerase II which synthesizes mRNA precursors and many functional non-coding RNAs. Pol II is the central component of the basal RNA polymerase II transcription machinery. It is composed of mobile elements that move relative to each other. POLR2J/RPB11 is part of the core element with the central large cleft. The chain is DNA-directed RNA polymerase II subunit RPB11 (POLR2J) from Bos taurus (Bovine).